The chain runs to 232 residues: Sugar fermentation stimulation protein homolog (232 aa).

Belongs to the SfsA family.

The sequence is that of Sugar fermentation stimulation protein homolog from Pyrobaculum arsenaticum (strain DSM 13514 / JCM 11321 / PZ6).